Consider the following 557-residue polypeptide: Intraflagellar transport protein 56 (557 aa).

The segment at 1 to 30 is disordered; it reads MLLSRMKPAVGGEASTSSNEKKRKNKSKKI. A compositionally biased stretch (basic residues) spans 21–30; sequence KKRKNKSKKI. TPR repeat units lie at residues 60 to 93, 95 to 128, 154 to 187, and 471 to 504; these read EHADLWTGFCAFHVGDHKRAMEEYKALTLRPDCP, DVWVYLGCALFFLGLYKEAEEAALKGSKTQLQNR, TEDQLSLASIHYMRSHYQEAIDIYKRILLQNREF, and ANDCYKMGQFYYAAKAFDALERLDPNPEYWEGKR.

It belongs to the IFT56 family. Component of the IFT complex B.

Its subcellular location is the cell projection. The protein resides in the cilium. Functionally, component of the intraflagellar transport (IFT) complex B required for transport of proteins in the motile cilium. Required for transport of specific ciliary cargo proteins related to motility, while it is neither required for IFT complex B assembly or motion nor for cilium assembly. Plays a key role in maintaining the integrity of the IFT complex B and the proper ciliary localization of the IFT complex B components. Essential for maintaining proper microtubule organization within the ciliary axoneme. The chain is Intraflagellar transport protein 56 from Danio rerio (Zebrafish).